Here is a 116-residue protein sequence, read N- to C-terminus: MSLIMSSVVATALVSLILAFIAFWLPSLKPDNEKLSPYECGFDPLGSARLPFSMRFFLIAILFLLFDLEIALLLPLPWGNQLFSPFSTLLWTTTILVLLTLGLIYEWFQGGLEWAE.

A run of 3 helical transmembrane segments spans residues Val8–Leu28, Phe56–Leu76, and Thr88–Phe108.

It belongs to the complex I subunit 3 family.

The protein resides in the mitochondrion membrane. It catalyses the reaction a ubiquinone + NADH + 5 H(+)(in) = a ubiquinol + NAD(+) + 4 H(+)(out). Functionally, core subunit of the mitochondrial membrane respiratory chain NADH dehydrogenase (Complex I) that is believed to belong to the minimal assembly required for catalysis. Complex I functions in the transfer of electrons from NADH to the respiratory chain. The immediate electron acceptor for the enzyme is believed to be ubiquinone. The protein is NADH-ubiquinone oxidoreductase chain 3 (MT-ND3) of Scyliorhinus canicula (Small-spotted catshark).